The following is an 85-amino-acid chain: Large ribosomal subunit protein bL27 (85 aa).

The disordered stretch occupies residues 1 to 20; that stretch reads MATKKAGGSTRNGRDSEAKR.

Belongs to the bacterial ribosomal protein bL27 family.

In Haemophilus influenzae (strain PittEE), this protein is Large ribosomal subunit protein bL27.